The sequence spans 343 residues: Thiamine-phosphate synthase (343 aa).

Residues M1 to R123 are unknown. The thiamine-phosphate synthase stretch occupies residues V124 to P343. Residues Q171–K175 and N203 each bind 4-amino-2-methyl-5-(diphosphooxymethyl)pyrimidine. Mg(2+) contacts are provided by D204 and D223. 4-amino-2-methyl-5-(diphosphooxymethyl)pyrimidine is bound at residue S242. T268–T270 contributes to the 2-[(2R,5Z)-2-carboxy-4-methylthiazol-5(2H)-ylidene]ethyl phosphate binding site. K271 provides a ligand contact to 4-amino-2-methyl-5-(diphosphooxymethyl)pyrimidine. G298 lines the 2-[(2R,5Z)-2-carboxy-4-methylthiazol-5(2H)-ylidene]ethyl phosphate pocket.

It belongs to the thiamine-phosphate synthase family. Mg(2+) serves as cofactor.

It catalyses the reaction 2-[(2R,5Z)-2-carboxy-4-methylthiazol-5(2H)-ylidene]ethyl phosphate + 4-amino-2-methyl-5-(diphosphooxymethyl)pyrimidine + 2 H(+) = thiamine phosphate + CO2 + diphosphate. The catalysed reaction is 2-(2-carboxy-4-methylthiazol-5-yl)ethyl phosphate + 4-amino-2-methyl-5-(diphosphooxymethyl)pyrimidine + 2 H(+) = thiamine phosphate + CO2 + diphosphate. It carries out the reaction 4-methyl-5-(2-phosphooxyethyl)-thiazole + 4-amino-2-methyl-5-(diphosphooxymethyl)pyrimidine + H(+) = thiamine phosphate + diphosphate. The protein operates within cofactor biosynthesis; thiamine diphosphate biosynthesis; thiamine phosphate from 4-amino-2-methyl-5-diphosphomethylpyrimidine and 4-methyl-5-(2-phosphoethyl)-thiazole: step 1/1. Functionally, condenses 4-methyl-5-(beta-hydroxyethyl)thiazole monophosphate (THZ-P) and 2-methyl-4-amino-5-hydroxymethyl pyrimidine pyrophosphate (HMP-PP) to form thiamine monophosphate (TMP). This is Thiamine-phosphate synthase from Synechocystis sp. (strain ATCC 27184 / PCC 6803 / Kazusa).